The chain runs to 335 residues: Glycerol-3-phosphate dehydrogenase [NAD(P)+] (335 aa).

Positions 10, 11, 31, and 105 each coordinate NADPH. 3 residues coordinate sn-glycerol 3-phosphate: Lys105, Gly136, and Ser138. Residue Ala140 coordinates NADPH. The sn-glycerol 3-phosphate site is built by Lys191, Asp244, Ser254, Arg255, and Asn256. Lys191 acts as the Proton acceptor in catalysis. Arg255 serves as a coordination point for NADPH. NADPH contacts are provided by Val279 and Glu281.

The protein belongs to the NAD-dependent glycerol-3-phosphate dehydrogenase family.

The protein localises to the cytoplasm. The catalysed reaction is sn-glycerol 3-phosphate + NAD(+) = dihydroxyacetone phosphate + NADH + H(+). It carries out the reaction sn-glycerol 3-phosphate + NADP(+) = dihydroxyacetone phosphate + NADPH + H(+). It participates in membrane lipid metabolism; glycerophospholipid metabolism. In terms of biological role, catalyzes the reduction of the glycolytic intermediate dihydroxyacetone phosphate (DHAP) to sn-glycerol 3-phosphate (G3P), the key precursor for phospholipid synthesis. The sequence is that of Glycerol-3-phosphate dehydrogenase [NAD(P)+] from Leptospira borgpetersenii serovar Hardjo-bovis (strain L550).